A 323-amino-acid chain; its full sequence is Phospho-N-acetylmuramoyl-pentapeptide-transferase (323 aa).

9 helical membrane passes run 5–25 (SAVL…PSLI), 57–77 (LLFI…QGLI), 81–101 (LWAL…DDSI), 118–138 (LCQV…GFQM), 140–160 (FGTT…IVGF), 173–193 (LVSG…LVNL), 196–216 (PGYP…LGFF), 225–247 (IFMG…LLLH), and 302–322 (IVFW…ILLV).

Belongs to the glycosyltransferase 4 family. MraY subfamily. Mg(2+) serves as cofactor.

The protein resides in the cell membrane. It catalyses the reaction UDP-N-acetyl-alpha-D-muramoyl-L-alanyl-gamma-D-glutamyl-L-lysyl-D-alanyl-D-alanine + di-trans,octa-cis-undecaprenyl phosphate = Mur2Ac(oyl-L-Ala-gamma-D-Glu-L-Lys-D-Ala-D-Ala)-di-trans,octa-cis-undecaprenyl diphosphate + UMP. It functions in the pathway cell wall biogenesis; peptidoglycan biosynthesis. Its function is as follows. Catalyzes the initial step of the lipid cycle reactions in the biosynthesis of the cell wall peptidoglycan: transfers peptidoglycan precursor phospho-MurNAc-pentapeptide from UDP-MurNAc-pentapeptide onto the lipid carrier undecaprenyl phosphate, yielding undecaprenyl-pyrophosphoryl-MurNAc-pentapeptide, known as lipid I. In Limosilactobacillus reuteri (strain DSM 20016) (Lactobacillus reuteri), this protein is Phospho-N-acetylmuramoyl-pentapeptide-transferase.